The primary structure comprises 416 residues: Isobutyryl-CoA dehydrogenase, mitochondrial (416 aa).

A mitochondrion-targeting transit peptide spans 1–21 (MISGLFKLSNKQSVLQNATKL). FAD contacts are provided by residues 156–165 (YCLTEPGSGS) and 189–191 (FIS). Ser-165 is a substrate binding site. 273-276 (NGGR) serves as a coordination point for substrate. FAD-binding positions include Arg-301, 311–312 (FQ), and 370–374 (QLFGG). Glu-397 acts as the Proton acceptor in catalysis. 399–401 (SDA) provides a ligand contact to FAD. Residue Arg-409 participates in substrate binding.

It belongs to the acyl-CoA dehydrogenase family. Homotetramer. It depends on FAD as a cofactor.

The protein resides in the mitochondrion. The catalysed reaction is 2-methylpropanoyl-CoA + oxidized [electron-transfer flavoprotein] + H(+) = 2-methylpropenoyl-CoA + reduced [electron-transfer flavoprotein]. It catalyses the reaction (2S)-2-methylbutanoyl-CoA + oxidized [electron-transfer flavoprotein] + H(+) = (2E)-2-methylbut-2-enoyl-CoA + reduced [electron-transfer flavoprotein]. It carries out the reaction propanoyl-CoA + oxidized [electron-transfer flavoprotein] + H(+) = acryloyl-CoA + reduced [electron-transfer flavoprotein]. It functions in the pathway amino-acid degradation; L-valine degradation. Its function is as follows. Isobutyryl-CoA dehydrogenase which catalyzes one of the steps of the valine catabolic pathway. To a lesser extent, is also able to catalyze the oxidation of (2S)-2-methylbutanoyl-CoA. This Dictyostelium discoideum (Social amoeba) protein is Isobutyryl-CoA dehydrogenase, mitochondrial (acad8).